The sequence spans 147 residues: Hemoglobin subunit rho (147 aa).

Positions 3 to 147 (HWSAEEKQLI…VAHALAYKYH (145 aa)) constitute a Globin domain. The heme b site is built by His64 and His93.

The protein belongs to the globin family.

In terms of biological role, the rho chain is the major early embryonic beta-type hemoglobin chain. This chain is Hemoglobin subunit rho, found in Gallus gallus (Chicken).